A 158-amino-acid chain; its full sequence is C-type lectin BfL-1 (158 aa).

The first 21 residues, 1–21 (MGHFTFIGLCLLAMFLSLSGA), serve as a signal peptide directing secretion. 4 disulfide bridges follow: C26–C37, C54–C154, C61–C156, and C129–C146. In terms of domain architecture, C-type lectin spans 33–155 (KNGLCYKVFS…CAALRPFLCQ (123 aa)). Q119, D121, and E127 together coordinate Ca(2+). A Galactose-binding motif is present at residues 119-121 (QPD). N134 is a glycosylation site (N-linked (GlcNAc...) asparagine). The Ca(2+) site is built by N142 and D143.

This sequence belongs to the true venom lectin family. As to quaternary structure, homodimer; non-covalently linked. Expressed by the venom gland.

It is found in the secreted. Its function is as follows. Galactose-binding lectin which recognizes specific carbohydrate structures and agglutinates a variety of animal cells by binding to cell-surface glycoproteins and glycolipids. May be a calcium-dependent lectin. This Bungarus fasciatus (Banded krait) protein is C-type lectin BfL-1.